Reading from the N-terminus, the 502-residue chain is Glutamate decarboxylase 1 (502 aa).

Position 8 is a phosphoserine (S8). K277 carries the post-translational modification N6-(pyridoxal phosphate)lysine. The interval 469 to 502 (LMVTVKKSDIDKQRDIITGWKKFVADRKKTSGIC) is calmodulin-binding.

This sequence belongs to the group II decarboxylase family. In terms of assembly, homohexamer. Interacts with calmodulin with a 1:3 stoichiometry. It depends on pyridoxal 5'-phosphate as a cofactor. Expressed in roots. Detected at low levels in shoots of young seedlings. Not detected in the root tips or in the central vascular bundle in the elongating region of mature roots.

It carries out the reaction L-glutamate + H(+) = 4-aminobutanoate + CO2. Up-regulated by calmodulin binding at physiological pH. Functionally, catalyzes the conversion of glutamate to 4-aminobutanoate (GABA). The calmodulin-binding is calcium-dependent and it is proposed to directly or indirectly form a calcium regulated control of GABA biosynthesis. The polypeptide is Glutamate decarboxylase 1 (GAD1) (Arabidopsis thaliana (Mouse-ear cress)).